The following is a 133-amino-acid chain: Large-conductance mechanosensitive channel (133 aa).

A run of 2 helical transmembrane segments spans residues 10 to 30 (FAVK…GAFG) and 76 to 96 (GAFI…FSMV).

Belongs to the MscL family. In terms of assembly, homopentamer.

The protein resides in the cell inner membrane. Its function is as follows. Channel that opens in response to stretch forces in the membrane lipid bilayer. May participate in the regulation of osmotic pressure changes within the cell. In Haemophilus ducreyi (strain 35000HP / ATCC 700724), this protein is Large-conductance mechanosensitive channel.